Reading from the N-terminus, the 85-residue chain is Cell division topological specificity factor (85 aa).

It belongs to the MinE family.

Functionally, prevents the cell division inhibition by proteins MinC and MinD at internal division sites while permitting inhibition at polar sites. This ensures cell division at the proper site by restricting the formation of a division septum at the midpoint of the long axis of the cell. This Xanthomonas campestris pv. campestris (strain 8004) protein is Cell division topological specificity factor.